We begin with the raw amino-acid sequence, 247 residues long: Orotidine 5'-phosphate decarboxylase (247 aa).

Residues Asp22, Lys44, 71-80, Thr131, Arg192, Gln201, Gly221, and Arg222 each bind substrate; that span reads DLKFHDIPNT. Residue Lys73 is the Proton donor of the active site.

It belongs to the OMP decarboxylase family. Type 1 subfamily. As to quaternary structure, homodimer.

It catalyses the reaction orotidine 5'-phosphate + H(+) = UMP + CO2. It functions in the pathway pyrimidine metabolism; UMP biosynthesis via de novo pathway; UMP from orotate: step 2/2. Its function is as follows. Catalyzes the decarboxylation of orotidine 5'-monophosphate (OMP) to uridine 5'-monophosphate (UMP). The protein is Orotidine 5'-phosphate decarboxylase of Pectobacterium atrosepticum (strain SCRI 1043 / ATCC BAA-672) (Erwinia carotovora subsp. atroseptica).